A 185-amino-acid polypeptide reads, in one-letter code: Crossover junction endodeoxyribonuclease RuvC (185 aa).

Active-site residues include Asp-7, Glu-68, and Asp-141. Asp-7, Glu-68, and Asp-141 together coordinate Mg(2+).

Belongs to the RuvC family. In terms of assembly, homodimer which binds Holliday junction (HJ) DNA. The HJ becomes 2-fold symmetrical on binding to RuvC with unstacked arms; it has a different conformation from HJ DNA in complex with RuvA. In the full resolvosome a probable DNA-RuvA(4)-RuvB(12)-RuvC(2) complex forms which resolves the HJ. Mg(2+) serves as cofactor.

It is found in the cytoplasm. It catalyses the reaction Endonucleolytic cleavage at a junction such as a reciprocal single-stranded crossover between two homologous DNA duplexes (Holliday junction).. Functionally, the RuvA-RuvB-RuvC complex processes Holliday junction (HJ) DNA during genetic recombination and DNA repair. Endonuclease that resolves HJ intermediates. Cleaves cruciform DNA by making single-stranded nicks across the HJ at symmetrical positions within the homologous arms, yielding a 5'-phosphate and a 3'-hydroxyl group; requires a central core of homology in the junction. The consensus cleavage sequence is 5'-(A/T)TT(C/G)-3'. Cleavage occurs on the 3'-side of the TT dinucleotide at the point of strand exchange. HJ branch migration catalyzed by RuvA-RuvB allows RuvC to scan DNA until it finds its consensus sequence, where it cleaves and resolves the cruciform DNA. The sequence is that of Crossover junction endodeoxyribonuclease RuvC from Mycobacterium sp. (strain MCS).